A 1375-amino-acid chain; its full sequence is DNA-directed RNA polymerase subunit beta' (1375 aa).

Positions 70, 72, 85, and 88 each coordinate Zn(2+). Asp-460, Asp-462, and Asp-464 together coordinate Mg(2+). Zn(2+) contacts are provided by Cys-800, Cys-874, Cys-881, and Cys-884.

This sequence belongs to the RNA polymerase beta' chain family. As to quaternary structure, the RNAP catalytic core consists of 2 alpha, 1 beta, 1 beta' and 1 omega subunit. When a sigma factor is associated with the core the holoenzyme is formed, which can initiate transcription. It depends on Mg(2+) as a cofactor. Requires Zn(2+) as cofactor.

It catalyses the reaction RNA(n) + a ribonucleoside 5'-triphosphate = RNA(n+1) + diphosphate. In terms of biological role, DNA-dependent RNA polymerase catalyzes the transcription of DNA into RNA using the four ribonucleoside triphosphates as substrates. This is DNA-directed RNA polymerase subunit beta' from Bdellovibrio bacteriovorus (strain ATCC 15356 / DSM 50701 / NCIMB 9529 / HD100).